The chain runs to 79 residues: uncharacterized protein (79 aa).

Helical transmembrane passes span 18–38 (IWII…IVLI) and 50–70 (GITF…FFLF).

Its subcellular location is the host membrane. This is an uncharacterized protein from Spiroplasma virus SpV1-R8A2 B (SpV1).